A 617-amino-acid polypeptide reads, in one-letter code: ATP-dependent RNA helicase DBP1 (617 aa).

The tract at residues 1-90 (MADLPQKVSN…TSANYNRGGS (90 aa)) is disordered. Polar residues predominate over residues 7–17 (KVSNLSINNKE). Residues 38–58 (PSFERSTPKQEDKVTGGDFFR) show a composition bias toward basic and acidic residues. The span at 79–90 (GGTSANYNRGGS) shows a compositional bias: polar residues. The Q motif signature appears at 154-182 (LDFSSPPLDELLMENIKLASFTKPTPVQK). One can recognise a Helicase ATP-binding domain in the interval 185-374 (IPIVTKGRDL…RDFLDNYIFL (190 aa)). 198-205 (AQTGSGKT) is an ATP binding site. The short motif at 318–321 (DEAD) is the DEAD box element. Residues 385–545 (NITQRILYVD…EVPTFLSDLS (161 aa)) form the Helicase C-terminal domain. The tract at residues 542–617 (SDLSRQNSRG…GYGNSNASWW (76 aa)) is disordered. Residues 580 to 594 (FGSTRPRNTGTSNWG) show a composition bias toward polar residues.

This sequence belongs to the DEAD box helicase family. DDX3/DED1 subfamily.

The protein localises to the cytoplasm. It catalyses the reaction ATP + H2O = ADP + phosphate + H(+). Its function is as follows. ATP-binding RNA helicase involved in translation initiation. Remodels RNA in response to ADP and ATP concentrations by facilitating disruption, but also formation of RNA duplexes. Redundant to DED1, may be required in conditions in which DED1 expression is decreased. The chain is ATP-dependent RNA helicase DBP1 (DBP1) from Saccharomyces cerevisiae (strain YJM789) (Baker's yeast).